A 109-amino-acid chain; its full sequence is Large ribosomal subunit protein uL22 (109 aa).

This sequence belongs to the universal ribosomal protein uL22 family. In terms of assembly, part of the 50S ribosomal subunit.

Functionally, this protein binds specifically to 23S rRNA; its binding is stimulated by other ribosomal proteins, e.g. L4, L17, and L20. It is important during the early stages of 50S assembly. It makes multiple contacts with different domains of the 23S rRNA in the assembled 50S subunit and ribosome. Its function is as follows. The globular domain of the protein is located near the polypeptide exit tunnel on the outside of the subunit, while an extended beta-hairpin is found that lines the wall of the exit tunnel in the center of the 70S ribosome. This is Large ribosomal subunit protein uL22 from Paraburkholderia phymatum (strain DSM 17167 / CIP 108236 / LMG 21445 / STM815) (Burkholderia phymatum).